A 284-amino-acid polypeptide reads, in one-letter code: Bifunctional protein FolD (284 aa).

NADP(+) is bound by residues 166 to 168 and serine 191; that span reads GRS.

This sequence belongs to the tetrahydrofolate dehydrogenase/cyclohydrolase family. As to quaternary structure, homodimer.

It carries out the reaction (6R)-5,10-methylene-5,6,7,8-tetrahydrofolate + NADP(+) = (6R)-5,10-methenyltetrahydrofolate + NADPH. The enzyme catalyses (6R)-5,10-methenyltetrahydrofolate + H2O = (6R)-10-formyltetrahydrofolate + H(+). It functions in the pathway one-carbon metabolism; tetrahydrofolate interconversion. Functionally, catalyzes the oxidation of 5,10-methylenetetrahydrofolate to 5,10-methenyltetrahydrofolate and then the hydrolysis of 5,10-methenyltetrahydrofolate to 10-formyltetrahydrofolate. The polypeptide is Bifunctional protein FolD (Leptospira borgpetersenii serovar Hardjo-bovis (strain JB197)).